A 337-amino-acid chain; its full sequence is Centromere protein N (337 aa).

Residues serine 226 and serine 233 each carry the phosphoserine modification.

It belongs to the CENP-N/CHL4 family. In terms of assembly, component of the CENPA-NAC complex, at least composed of CENPA, CENPC, CENPH, CENPM, CENPN, CENPT and CENPU. The CENPA-NAC complex interacts with the CENPA-CAD complex, composed of CENPI, CENPK, CENPL, CENPO, CENPP, CENPQ, CENPR and CENPS. Interacts directly with CENPA. Identified in a centromere complex containing histones H2A, H2B and H4, and at least CENPA, CENPB, CENPC, CENPT, CENPN, HJURP, SUPT16H, SSRP1 and RSF1.

Its subcellular location is the nucleus. It is found in the chromosome. The protein localises to the centromere. The protein resides in the kinetochore. Its function is as follows. Component of the CENPA-NAC (nucleosome-associated) complex, a complex that plays a central role in assembly of kinetochore proteins, mitotic progression and chromosome segregation. The CENPA-NAC complex recruits the CENPA-CAD (nucleosome distal) complex and may be involved in incorporation of newly synthesized CENPA into centromeres. CENPN is the first protein to bind specifically to CENPA nucleosomes and the direct binding of CENPA nucleosomes by CENPN is required for centromere assembly. Required for chromosome congression and efficiently align the chromosomes on a metaphase plate. This is Centromere protein N (Cenpn) from Mus musculus (Mouse).